The sequence spans 556 residues: Oxygen-dependent choline dehydrogenase (556 aa).

4-33 (DYIIIGAGSAGNVLATRLTEDPNTSVLLLE) contributes to the FAD binding site. His-473 acts as the Proton acceptor in catalysis.

This sequence belongs to the GMC oxidoreductase family. FAD serves as cofactor.

It carries out the reaction choline + A = betaine aldehyde + AH2. It catalyses the reaction betaine aldehyde + NAD(+) + H2O = glycine betaine + NADH + 2 H(+). It functions in the pathway amine and polyamine biosynthesis; betaine biosynthesis via choline pathway; betaine aldehyde from choline (cytochrome c reductase route): step 1/1. In terms of biological role, involved in the biosynthesis of the osmoprotectant glycine betaine. Catalyzes the oxidation of choline to betaine aldehyde and betaine aldehyde to glycine betaine at the same rate. The protein is Oxygen-dependent choline dehydrogenase of Shigella flexneri serotype 5b (strain 8401).